The following is a 259-amino-acid chain: Deoxyribose-phosphate aldolase (259 aa).

Residue Asp102 is the Proton donor/acceptor of the active site. The active-site Schiff-base intermediate with acetaldehyde is the Lys167. The Proton donor/acceptor role is filled by Lys201.

Belongs to the DeoC/FbaB aldolase family. DeoC type 2 subfamily.

The protein resides in the cytoplasm. The catalysed reaction is 2-deoxy-D-ribose 5-phosphate = D-glyceraldehyde 3-phosphate + acetaldehyde. It participates in carbohydrate degradation; 2-deoxy-D-ribose 1-phosphate degradation; D-glyceraldehyde 3-phosphate and acetaldehyde from 2-deoxy-alpha-D-ribose 1-phosphate: step 2/2. Catalyzes a reversible aldol reaction between acetaldehyde and D-glyceraldehyde 3-phosphate to generate 2-deoxy-D-ribose 5-phosphate. This chain is Deoxyribose-phosphate aldolase, found in Klebsiella pneumoniae (strain 342).